We begin with the raw amino-acid sequence, 336 residues long: tRNA(Ile)-lysidine synthase (336 aa).

ATP is bound at residue 40–45 (SGGQDS).

Belongs to the tRNA(Ile)-lysidine synthase family.

Its subcellular location is the cytoplasm. It carries out the reaction cytidine(34) in tRNA(Ile2) + L-lysine + ATP = lysidine(34) in tRNA(Ile2) + AMP + diphosphate + H(+). Functionally, ligates lysine onto the cytidine present at position 34 of the AUA codon-specific tRNA(Ile) that contains the anticodon CAU, in an ATP-dependent manner. Cytidine is converted to lysidine, thus changing the amino acid specificity of the tRNA from methionine to isoleucine. This is tRNA(Ile)-lysidine synthase from Prochlorococcus marinus subsp. pastoris (strain CCMP1986 / NIES-2087 / MED4).